The following is a 304-amino-acid chain: Ribonuclease Z (304 aa).

The Zn(2+) site is built by His-63, His-65, Asp-67, His-68, His-143, Asp-213, and His-271. Asp-67 (proton acceptor) is an active-site residue.

This sequence belongs to the RNase Z family. In terms of assembly, homodimer. The cofactor is Zn(2+).

The enzyme catalyses Endonucleolytic cleavage of RNA, removing extra 3' nucleotides from tRNA precursor, generating 3' termini of tRNAs. A 3'-hydroxy group is left at the tRNA terminus and a 5'-phosphoryl group is left at the trailer molecule.. In terms of biological role, zinc phosphodiesterase, which displays some tRNA 3'-processing endonuclease activity. Probably involved in tRNA maturation, by removing a 3'-trailer from precursor tRNA. The polypeptide is Ribonuclease Z (Porphyromonas gingivalis (strain ATCC 33277 / DSM 20709 / CIP 103683 / JCM 12257 / NCTC 11834 / 2561)).